The following is a 401-amino-acid chain: Tryptophan synthase beta chain (401 aa).

Position 88 is an N6-(pyridoxal phosphate)lysine (lysine 88).

This sequence belongs to the TrpB family. As to quaternary structure, tetramer of two alpha and two beta chains. Pyridoxal 5'-phosphate is required as a cofactor.

It catalyses the reaction (1S,2R)-1-C-(indol-3-yl)glycerol 3-phosphate + L-serine = D-glyceraldehyde 3-phosphate + L-tryptophan + H2O. Its pathway is amino-acid biosynthesis; L-tryptophan biosynthesis; L-tryptophan from chorismate: step 5/5. Its function is as follows. The beta subunit is responsible for the synthesis of L-tryptophan from indole and L-serine. The sequence is that of Tryptophan synthase beta chain from Shewanella denitrificans (strain OS217 / ATCC BAA-1090 / DSM 15013).